Reading from the N-terminus, the 336-residue chain is Protein-glutamate methylesterase/protein-glutamine glutaminase 3 (336 aa).

Residues 2 to 119 (KIAIVNDMPM…PNPREAAAPL (118 aa)) enclose the Response regulatory domain. Residue D53 is modified to 4-aspartylphosphate. The region spanning 147–336 (VSRRDRLVAI…APRLMEVFTQ (190 aa)) is the CheB-type methylesterase domain. Residues S159, H186, and D279 contribute to the active site.

It belongs to the CheB family. Phosphorylated by CheA. Phosphorylation of the N-terminal regulatory domain activates the methylesterase activity.

The protein localises to the cytoplasm. It carries out the reaction [protein]-L-glutamate 5-O-methyl ester + H2O = L-glutamyl-[protein] + methanol + H(+). It catalyses the reaction L-glutaminyl-[protein] + H2O = L-glutamyl-[protein] + NH4(+). In terms of biological role, involved in chemotaxis. Part of a chemotaxis signal transduction system that modulates chemotaxis in response to various stimuli. Catalyzes the demethylation of specific methylglutamate residues introduced into the chemoreceptors (methyl-accepting chemotaxis proteins or MCP) by CheR. Also mediates the irreversible deamidation of specific glutamine residues to glutamic acid. The sequence is that of Protein-glutamate methylesterase/protein-glutamine glutaminase 3 from Pseudomonas syringae pv. tomato (strain ATCC BAA-871 / DC3000).